Here is a 241-residue protein sequence, read N- to C-terminus: MGQKINPIGFRLGINRTWDSRWFADNAEYGQLLHEDLKMRKFVMDELKQAGISKVVIERPHKKCRVTIHSARPGLIIGKKGADIDKLRKKLSDMTNSETHLNIVEVRKPEIDAVLVAQSIAQQLERRVAFRRAMKRAVQSAMRLGAEGIKITCGGRLGGAEIARTEWYREGRVPLHTLRADIDYGTAEAETAFGICGIKVWIFKGEILEHDPMASERRALEGDAQGPASRDRDRDRRRDNA.

The 69-residue stretch at 39-107 folds into the KH type-2 domain; that stretch reads MRKFVMDELK…ETHLNIVEVR (69 aa). A disordered region spans residues 214 to 241; it reads ASERRALEGDAQGPASRDRDRDRRRDNA. Over residues 229 to 241 the composition is skewed to basic and acidic residues; the sequence is SRDRDRDRRRDNA.

The protein belongs to the universal ribosomal protein uS3 family. As to quaternary structure, part of the 30S ribosomal subunit. Forms a tight complex with proteins S10 and S14.

In terms of biological role, binds the lower part of the 30S subunit head. Binds mRNA in the 70S ribosome, positioning it for translation. The protein is Small ribosomal subunit protein uS3 of Rhizobium rhizogenes (strain K84 / ATCC BAA-868) (Agrobacterium radiobacter).